The primary structure comprises 351 residues: Phospho-N-acetylmuramoyl-pentapeptide-transferase (351 aa).

10 consecutive transmembrane segments (helical) span residues 17 to 37 (MAYATIFAFLLSLIIGPHIIL), 62 to 82 (GIPTMGGILIFFCVFISLVFW), 85 to 105 (ILNVYFLIMLFVMLGFAFLGF), 124 to 144 (FKIYGQIIFSFISVGTLYYFG), 161 to 181 (IDLGLFYIPFGMFILISASNS), 190 to 210 (GLAIGLSIVITGALIIIAYLT), 230 to 250 (LVIFLGALLGGSFGFLWFNAY), 254 to 274 (IMMGDTGSLALGAILGMAALI), 279 to 299 (ILFSILAGVFIIETMSVIIQV), and 328 to 348 (QVVIRFWIIGLIFAIIALSTI).

The protein belongs to the glycosyltransferase 4 family. MraY subfamily. It depends on Mg(2+) as a cofactor.

Its subcellular location is the cell inner membrane. It carries out the reaction UDP-N-acetyl-alpha-D-muramoyl-L-alanyl-gamma-D-glutamyl-meso-2,6-diaminopimeloyl-D-alanyl-D-alanine + di-trans,octa-cis-undecaprenyl phosphate = di-trans,octa-cis-undecaprenyl diphospho-N-acetyl-alpha-D-muramoyl-L-alanyl-D-glutamyl-meso-2,6-diaminopimeloyl-D-alanyl-D-alanine + UMP. The protein operates within cell wall biogenesis; peptidoglycan biosynthesis. Functionally, catalyzes the initial step of the lipid cycle reactions in the biosynthesis of the cell wall peptidoglycan: transfers peptidoglycan precursor phospho-MurNAc-pentapeptide from UDP-MurNAc-pentapeptide onto the lipid carrier undecaprenyl phosphate, yielding undecaprenyl-pyrophosphoryl-MurNAc-pentapeptide, known as lipid I. The chain is Phospho-N-acetylmuramoyl-pentapeptide-transferase from Borrelia garinii subsp. bavariensis (strain ATCC BAA-2496 / DSM 23469 / PBi) (Borreliella bavariensis).